We begin with the raw amino-acid sequence, 256 residues long: Thiazole synthase (256 aa).

Lysine 96 serves as the catalytic Schiff-base intermediate with DXP. Residues glycine 157, 184 to 185 (AG), and 206 to 207 (NT) each bind 1-deoxy-D-xylulose 5-phosphate.

It belongs to the ThiG family. Homotetramer. Forms heterodimers with either ThiH or ThiS.

It localises to the cytoplasm. It carries out the reaction [ThiS sulfur-carrier protein]-C-terminal-Gly-aminoethanethioate + 2-iminoacetate + 1-deoxy-D-xylulose 5-phosphate = [ThiS sulfur-carrier protein]-C-terminal Gly-Gly + 2-[(2R,5Z)-2-carboxy-4-methylthiazol-5(2H)-ylidene]ethyl phosphate + 2 H2O + H(+). It functions in the pathway cofactor biosynthesis; thiamine diphosphate biosynthesis. In terms of biological role, catalyzes the rearrangement of 1-deoxy-D-xylulose 5-phosphate (DXP) to produce the thiazole phosphate moiety of thiamine. Sulfur is provided by the thiocarboxylate moiety of the carrier protein ThiS. In vitro, sulfur can be provided by H(2)S. In Brucella canis (strain ATCC 23365 / NCTC 10854 / RM-666), this protein is Thiazole synthase.